We begin with the raw amino-acid sequence, 158 residues long: Dysbindin domain-containing protein 2 (158 aa).

A disordered region spans residues phenylalanine 79–serine 158. Residues proline 106 to serine 131 show a composition bias toward low complexity. A phosphoserine mark is found at serine 119 and serine 120. Phosphothreonine is present on threonine 137. Position 142 is a phosphoserine (serine 142). Over residues serine 142–glycine 151 the composition is skewed to acidic residues.

It belongs to the dysbindin family. Monomer. Interacts with CSNK1D and CSNK1E.

In terms of biological role, may modulate the activity of casein kinase-1. Inhibits CSNK1D autophosphorylation (in vitro). This Mus musculus (Mouse) protein is Dysbindin domain-containing protein 2 (Dbndd2).